We begin with the raw amino-acid sequence, 410 residues long: MKKEVVVIGGGIVGLSCAYSMHKLGHKVCVIEKSDGTNGTSFGNAGLISAFKKAPLSCPGVVLDTLKLMLKNQAPLKFHFGLNLKLYQWILKFMTSANAKSTHRTIALFERYGWLSIDMYHQMLKDGMDFWYKEDGLLMIYTLEESFEKKLKTCDNSGAYKILNVKETKEYMPIANDNICGSVLLTENAHVDPGEVVRSLQQYLQNAGVEFLYNEEVIDFEFKNNLIEGVITHKEKIQAETIILATGANPTLIKKTKNDFLMMGAKGYSITFKMPEELKPKTSSLFADIFMAMTPRRDTVRITSKLELNTNNALIDKEQIANMKKNLAAFTQPFEMKDAIEWCGFRPLTPNDIPYLGYDKRYKNLIHATGLGWLGITFGPAIGKIIANLSQDGANEKNADIMLFSAFFRD.

Gly9–Gly14 provides a ligand contact to FAD.

This sequence belongs to the DadA oxidoreductase family. It depends on FAD as a cofactor.

It is found in the cell inner membrane. It catalyses the reaction a D-alpha-amino acid + a quinone + H2O = a 2-oxocarboxylate + a quinol + NH4(+). In terms of biological role, catalyzes the oxidative deamination of D-amino acids. Has broad substrate specificity; is mostly active on D-proline, and to a lesser extent, on several other D-amino acids such as D-alanine, D-phenylalanine and D-serine. Mediates electron transport from D-proline to coenzyme Q1 in vitro, and is involved in the electron transport chain from D-proline to the c-type cytochrome in vivo. In Helicobacter pylori (strain J99 / ATCC 700824) (Campylobacter pylori J99), this protein is D-amino acid dehydrogenase.